A 167-amino-acid polypeptide reads, in one-letter code: Glucose-6-phosphate isomerase (167 aa).

The active-site Proton donor is Glu54. The active site involves His85.

This sequence belongs to the GPI family.

Its subcellular location is the cytoplasm. The enzyme catalyses alpha-D-glucose 6-phosphate = beta-D-fructose 6-phosphate. It functions in the pathway carbohydrate biosynthesis; gluconeogenesis. It participates in carbohydrate degradation; glycolysis; D-glyceraldehyde 3-phosphate and glycerone phosphate from D-glucose: step 2/4. In terms of biological role, catalyzes the reversible isomerization of glucose-6-phosphate to fructose-6-phosphate. The chain is Glucose-6-phosphate isomerase from Klebsiella oxytoca.